Reading from the N-terminus, the 457-residue chain is uncharacterized protein (457 aa).

Transmembrane regions (helical) follow at residues M1–L21 and I250–F270.

The protein localises to the membrane. This is an uncharacterized protein from Saccharomyces cerevisiae (strain ATCC 204508 / S288c) (Baker's yeast).